Reading from the N-terminus, the 606-residue chain is DNA mismatch repair protein MutL (606 aa).

Residues 348 to 378 (QPHAQRPQAPWSAETSPFRPYPPAAGFSERP) form a disordered region.

Belongs to the DNA mismatch repair MutL/HexB family.

This protein is involved in the repair of mismatches in DNA. It is required for dam-dependent methyl-directed DNA mismatch repair. May act as a 'molecular matchmaker', a protein that promotes the formation of a stable complex between two or more DNA-binding proteins in an ATP-dependent manner without itself being part of a final effector complex. The polypeptide is DNA mismatch repair protein MutL (Rhizobium etli (strain CIAT 652)).